Consider the following 654-residue polypeptide: Peptide-N(4)-(N-acetyl-beta-glucosaminyl)asparagine amidase (654 aa).

At Ala2 the chain carries N-acetylalanine. The region spanning Glu30–Lys91 is the PUB domain. A disordered region spans residues Arg112–Ser163. The segment covering Ser124–Ser163 has biased composition (polar residues). Thr137 carries the post-translational modification Phosphothreonine. Zn(2+)-binding residues include Cys250, Cys253, Cys283, and Cys286. Catalysis depends on Cys309, which acts as the Nucleophile. Active-site residues include His336 and Asp353. Positions Glu454–Leu654 constitute a PAW domain.

Belongs to the transglutaminase-like superfamily. PNGase family. As to quaternary structure, component of a complex required to couple retrotranslocation, ubiquitination and deglycosylation composed of NGLY1, SAKS1, AMFR, VCP and RAD23B. Interacts with the proteasome components RAD23B and PSMC1. Interacts with directly with VCP. Interacts with DERL1, bringing it close to the endoplasmic reticulum membrane. Interacts with SAKS1. Requires Zn(2+) as cofactor.

The protein localises to the cytoplasm. The enzyme catalyses Hydrolysis of an N(4)-(acetyl-beta-D-glucosaminyl)asparagine residue in which the glucosamine residue may be further glycosylated, to yield a (substituted) N-acetyl-beta-D-glucosaminylamine and a peptide containing an aspartate residue.. Inhibited by Z-VAD-fmk, a well-known caspase inhibitor, which inhibits enzyme activity through covalent binding of the carbohydrate to the single Cys-306 residue. In terms of biological role, specifically deglycosylates the denatured form of N-linked glycoproteins in the cytoplasm and assists their proteasome-mediated degradation. Cleaves the beta-aspartyl-glucosamine (GlcNAc) of the glycan and the amide side chain of Asn, converting Asn to Asp. Prefers proteins containing high-mannose over those bearing complex type oligosaccharides. Can recognize misfolded proteins in the endoplasmic reticulum that are exported to the cytosol to be destroyed and deglycosylate them, while it has no activity toward native proteins. Deglycosylation is a prerequisite for subsequent proteasome-mediated degradation of some, but not all, misfolded glycoproteins. The polypeptide is Peptide-N(4)-(N-acetyl-beta-glucosaminyl)asparagine amidase (NGLY1) (Homo sapiens (Human)).